The following is a 395-amino-acid chain: Aspergillopepsin-1 (395 aa).

A signal peptide spans 1–20; sequence MVVFSKVTAVVVGLSTIVSA. A propeptide spans 21–70 (activation peptide); the sequence is VPVVQPRKGFTINQVARPVTNKKTVNLPAVYANALTKYGGTVPDSVKAAA. Residues 86-392 enclose the Peptidase A1 domain; sequence YLTPVKVGGT…DSQGPRLGFA (307 aa). Residues aspartate 102 and aspartate 284 contribute to the active site. A disulfide bond links cysteine 320 and cysteine 355.

This sequence belongs to the peptidase A1 family. As to quaternary structure, monomer.

It is found in the secreted. It catalyses the reaction Hydrolysis of proteins with broad specificity. Generally favors hydrophobic residues in P1 and P1', but also accepts Lys in P1, which leads to activation of trypsinogen. Does not clot milk.. Functionally, secreted aspartic endopeptidase that allows assimilation of proteinaceous substrates. The scissile peptide bond is attacked by a nucleophilic water molecule activated by two aspartic residues in the active site. Shows a broad primary substrate specificity. Favors hydrophobic residues at the P1 and P1' positions, but also accepts a lysine residue in the P1 position, leading to the activation of trypsinogen and chymotrypsinogen A. This Aspergillus fumigatus (strain CBS 144.89 / FGSC A1163 / CEA10) (Neosartorya fumigata) protein is Aspergillopepsin-1 (pepA).